The following is a 285-amino-acid chain: Probable endonuclease 4 (285 aa).

The Zn(2+) site is built by His69, His109, Glu145, Asp179, His182, His216, Asp229, His231, and Glu261.

Belongs to the AP endonuclease 2 family. Zn(2+) is required as a cofactor.

It carries out the reaction Endonucleolytic cleavage to 5'-phosphooligonucleotide end-products.. Endonuclease IV plays a role in DNA repair. It cleaves phosphodiester bonds at apurinic or apyrimidinic (AP) sites, generating a 3'-hydroxyl group and a 5'-terminal sugar phosphate. The protein is Probable endonuclease 4 of Shigella boydii serotype 4 (strain Sb227).